Here is a 505-residue protein sequence, read N- to C-terminus: Lysine--tRNA ligase, heat inducible (505 aa).

Lys114 and Lys156 each carry N6-acetyllysine. Positions 415 and 422 each coordinate Mg(2+).

The protein belongs to the class-II aminoacyl-tRNA synthetase family. In terms of assembly, homodimer. It depends on Mg(2+) as a cofactor.

It localises to the cytoplasm. The catalysed reaction is tRNA(Lys) + L-lysine + ATP = L-lysyl-tRNA(Lys) + AMP + diphosphate. The protein is Lysine--tRNA ligase, heat inducible (lysU) of Escherichia coli O157:H7.